The sequence spans 407 residues: Peptidase T (407 aa).

Histidine 82 serves as a coordination point for Zn(2+). Aspartate 84 is a catalytic residue. Residue aspartate 143 coordinates Zn(2+). Catalysis depends on glutamate 177, which acts as the Proton acceptor. Zn(2+) is bound by residues glutamate 178, aspartate 200, and histidine 382.

Belongs to the peptidase M20B family. The cofactor is Zn(2+).

It localises to the cytoplasm. It catalyses the reaction Release of the N-terminal residue from a tripeptide.. Cleaves the N-terminal amino acid of tripeptides. The protein is Peptidase T of Streptococcus pyogenes serotype M3 (strain ATCC BAA-595 / MGAS315).